A 2136-amino-acid chain; its full sequence is Protein Ycf2 (2136 aa).

1404-1411 lines the ATP pocket; sequence GPIETGRS.

Belongs to the Ycf2 family.

Its subcellular location is the plastid. It is found in the chloroplast stroma. Probable ATPase of unknown function. Its presence in a non-photosynthetic plant (Epifagus virginiana) and experiments in tobacco indicate that it has an essential function which is probably not related to photosynthesis. The protein is Protein Ycf2 of Marchantia polymorpha (Common liverwort).